The primary structure comprises 313 residues: Biotin synthase (313 aa).

The Radical SAM core domain occupies 38-262 (REVQISTLLS…TMPHARVRLS (225 aa)). C53, C57, and C60 together coordinate [4Fe-4S] cluster. [2Fe-2S] cluster contacts are provided by C97, C128, C188, and R260.

This sequence belongs to the radical SAM superfamily. Biotin synthase family. Homodimer. Requires [4Fe-4S] cluster as cofactor. The cofactor is [2Fe-2S] cluster.

It catalyses the reaction (4R,5S)-dethiobiotin + (sulfur carrier)-SH + 2 reduced [2Fe-2S]-[ferredoxin] + 2 S-adenosyl-L-methionine = (sulfur carrier)-H + biotin + 2 5'-deoxyadenosine + 2 L-methionine + 2 oxidized [2Fe-2S]-[ferredoxin]. It participates in cofactor biosynthesis; biotin biosynthesis; biotin from 7,8-diaminononanoate: step 2/2. Functionally, catalyzes the conversion of dethiobiotin (DTB) to biotin by the insertion of a sulfur atom into dethiobiotin via a radical-based mechanism. This Granulibacter bethesdensis (strain ATCC BAA-1260 / CGDNIH1) protein is Biotin synthase.